Consider the following 362-residue polypeptide: UDP-N-acetylglucosamine--N-acetylmuramyl-(pentapeptide) pyrophosphoryl-undecaprenol N-acetylglucosamine transferase (362 aa).

Residues 15 to 17 (TGG), Asn-127, Arg-165, Ser-191, Ile-247, 266 to 271 (ALTVSE), and Gln-292 each bind UDP-N-acetyl-alpha-D-glucosamine.

The protein belongs to the glycosyltransferase 28 family. MurG subfamily.

It localises to the cell inner membrane. The catalysed reaction is di-trans,octa-cis-undecaprenyl diphospho-N-acetyl-alpha-D-muramoyl-L-alanyl-D-glutamyl-meso-2,6-diaminopimeloyl-D-alanyl-D-alanine + UDP-N-acetyl-alpha-D-glucosamine = di-trans,octa-cis-undecaprenyl diphospho-[N-acetyl-alpha-D-glucosaminyl-(1-&gt;4)]-N-acetyl-alpha-D-muramoyl-L-alanyl-D-glutamyl-meso-2,6-diaminopimeloyl-D-alanyl-D-alanine + UDP + H(+). It functions in the pathway cell wall biogenesis; peptidoglycan biosynthesis. Its function is as follows. Cell wall formation. Catalyzes the transfer of a GlcNAc subunit on undecaprenyl-pyrophosphoryl-MurNAc-pentapeptide (lipid intermediate I) to form undecaprenyl-pyrophosphoryl-MurNAc-(pentapeptide)GlcNAc (lipid intermediate II). This chain is UDP-N-acetylglucosamine--N-acetylmuramyl-(pentapeptide) pyrophosphoryl-undecaprenol N-acetylglucosamine transferase, found in Shewanella putrefaciens (strain CN-32 / ATCC BAA-453).